The sequence spans 338 residues: POU domain, class 4, transcription factor 3 (338 aa).

The POU-IV box motif lies at 56–65 (RAEALAAVDI). In terms of domain architecture, POU-specific spans 179 to 256 (DVESDPRELE…VLQAWLEEAE (78 aa)). The segment at residues 274 to 333 (RKRKRTSIAAPEKRSLEAYFAIQPRPSSEKIAAIAEKLDLKKNVVRVWFCNQRQKQKRMK) is a DNA-binding region (homeobox).

This sequence belongs to the POU transcription factor family. Class-4 subfamily. As to quaternary structure, interacts with ISL1. In terms of tissue distribution, brain. Seems to be specific to the retina.

The protein resides in the nucleus. The protein localises to the cytoplasm. Acts as a transcriptional activator. Acts by binding to sequences related to the consensus octamer motif 5'-ATGCAAAT-3' in the regulatory regions of its target genes. Involved in the auditory system development, required for terminal differentiation of hair cells in the inner ear. The protein is POU domain, class 4, transcription factor 3 (POU4F3) of Homo sapiens (Human).